Here is a 548-residue protein sequence, read N- to C-terminus: Probable manganese-dependent inorganic pyrophosphatase (548 aa).

Positions 1–74 (MKALERVYVI…HIETLEPTVE (74 aa)) are PPase part 1. 3 residues coordinate Mn(2+): His-12, Asp-16, and Asp-18. CBS domains lie at 77–132 (ELKN…RLKI) and 254–311 (MSKK…VILV). Residues 306 to 548 (KKVILVDHNE…KIGEVLRRER (243 aa)) form a PPase part 2 region. Residues Asp-312, His-334, and Asp-386 each contribute to the Mn(2+) site.

This sequence belongs to the PPase class C family. It depends on Mn(2+) as a cofactor.

Its subcellular location is the cytoplasm. The catalysed reaction is diphosphate + H2O = 2 phosphate + H(+). The sequence is that of Probable manganese-dependent inorganic pyrophosphatase (ppaC) from Thermotoga maritima (strain ATCC 43589 / DSM 3109 / JCM 10099 / NBRC 100826 / MSB8).